Reading from the N-terminus, the 420-residue chain is Serine hydroxymethyltransferase (420 aa).

Residues L118 and 122–124 (GHL) contribute to the (6S)-5,6,7,8-tetrahydrofolate site. K227 is modified (N6-(pyridoxal phosphate)lysine).

The protein belongs to the SHMT family. In terms of assembly, homodimer. Requires pyridoxal 5'-phosphate as cofactor.

The protein resides in the cytoplasm. The catalysed reaction is (6R)-5,10-methylene-5,6,7,8-tetrahydrofolate + glycine + H2O = (6S)-5,6,7,8-tetrahydrofolate + L-serine. It functions in the pathway one-carbon metabolism; tetrahydrofolate interconversion. The protein operates within amino-acid biosynthesis; glycine biosynthesis; glycine from L-serine: step 1/1. In terms of biological role, catalyzes the reversible interconversion of serine and glycine with tetrahydrofolate (THF) serving as the one-carbon carrier. This reaction serves as the major source of one-carbon groups required for the biosynthesis of purines, thymidylate, methionine, and other important biomolecules. Also exhibits THF-independent aldolase activity toward beta-hydroxyamino acids, producing glycine and aldehydes, via a retro-aldol mechanism. The polypeptide is Serine hydroxymethyltransferase (Persephonella marina (strain DSM 14350 / EX-H1)).